Reading from the N-terminus, the 384-residue chain is tRNA-specific 2-thiouridylase MnmA (384 aa).

Residues 30 to 37 (GMSGGVDS) and Met-56 each bind ATP. Positions 116 to 118 (NPD) are interaction with target base in tRNA. Cys-121 serves as the catalytic Nucleophile. Cys-121 and Cys-218 form a disulfide bridge. Residue Gly-146 participates in ATP binding. The tract at residues 168-170 (KDQ) is interaction with tRNA. Cys-218 (cysteine persulfide intermediate) is an active-site residue. Residues 330–331 (RY) are interaction with tRNA.

It belongs to the MnmA/TRMU family.

The protein localises to the cytoplasm. The catalysed reaction is S-sulfanyl-L-cysteinyl-[protein] + uridine(34) in tRNA + AH2 + ATP = 2-thiouridine(34) in tRNA + L-cysteinyl-[protein] + A + AMP + diphosphate + H(+). Its function is as follows. Catalyzes the 2-thiolation of uridine at the wobble position (U34) of tRNA, leading to the formation of s(2)U34. This Haemophilus ducreyi (strain 35000HP / ATCC 700724) protein is tRNA-specific 2-thiouridylase MnmA.